Consider the following 32-residue polypeptide: Alcohol dehydrogenase-related 31 kDa protein (32 aa).

11–32 (YVADCGGIALETSXVLMTKNIA) is a binding site for NAD(+).

The protein belongs to the short-chain dehydrogenases/reductases (SDR) family.

The polypeptide is Alcohol dehydrogenase-related 31 kDa protein (Adhr) (Drosophila yakuba (Fruit fly)).